Consider the following 179-residue polypeptide: Large ribosomal subunit protein uL5 (179 aa).

It belongs to the universal ribosomal protein uL5 family. As to quaternary structure, part of the 50S ribosomal subunit; part of the 5S rRNA/L5/L18/L25 subcomplex. Contacts the 5S rRNA and the P site tRNA. Forms a bridge to the 30S subunit in the 70S ribosome.

This is one of the proteins that bind and probably mediate the attachment of the 5S RNA into the large ribosomal subunit, where it forms part of the central protuberance. In the 70S ribosome it contacts protein S13 of the 30S subunit (bridge B1b), connecting the 2 subunits; this bridge is implicated in subunit movement. Contacts the P site tRNA; the 5S rRNA and some of its associated proteins might help stabilize positioning of ribosome-bound tRNAs. This Halalkalibacterium halodurans (strain ATCC BAA-125 / DSM 18197 / FERM 7344 / JCM 9153 / C-125) (Bacillus halodurans) protein is Large ribosomal subunit protein uL5.